The following is a 321-amino-acid chain: Ribosomal RNA small subunit methyltransferase H (321 aa).

S-adenosyl-L-methionine-binding positions include Gly40 to His42, Asp60, Phe84, Asp106, and Gln113.

Belongs to the methyltransferase superfamily. RsmH family.

It localises to the cytoplasm. It catalyses the reaction cytidine(1402) in 16S rRNA + S-adenosyl-L-methionine = N(4)-methylcytidine(1402) in 16S rRNA + S-adenosyl-L-homocysteine + H(+). Specifically methylates the N4 position of cytidine in position 1402 (C1402) of 16S rRNA. The sequence is that of Ribosomal RNA small subunit methyltransferase H from Haemophilus influenzae (strain ATCC 51907 / DSM 11121 / KW20 / Rd).